Here is a 271-residue protein sequence, read N- to C-terminus: Glutamate 5-kinase (271 aa).

K14 provides a ligand contact to ATP. The substrate site is built by S54, D141, and N157. Residues S177 to D178 and T219 to K225 each bind ATP.

Belongs to the glutamate 5-kinase family.

Its subcellular location is the cytoplasm. It catalyses the reaction L-glutamate + ATP = L-glutamyl 5-phosphate + ADP. It functions in the pathway amino-acid biosynthesis; L-proline biosynthesis; L-glutamate 5-semialdehyde from L-glutamate: step 1/2. Functionally, catalyzes the transfer of a phosphate group to glutamate to form L-glutamate 5-phosphate. The polypeptide is Glutamate 5-kinase (Enterococcus faecalis (strain ATCC 700802 / V583)).